A 743-amino-acid chain; its full sequence is Peptide transporter family 1 (743 aa).

The tract at residues 1–28 is disordered; it reads MASEITNGKNGQNGKNGQKEESDSQIAP. Residues 7 to 16 show a composition bias toward low complexity; that stretch reads NGKNGQNGKN. 10 helical membrane passes run 74–94, 104–124, 132–152, 173–193, 207–227, 334–354, 364–384, 597–619, 629–649, and 659–679; these read VLFHTFTMLVYIFPLIGALIA, ILYLSLVYSLGAMVVSFGAVP, AVTVVGLLLIAIGTGGIKPCV, FSLFYFAINAGSLISTTFTPI, FSLAFGVPAILMIFSVIIFMA, VVNPLLILGFLPLFDYIIYPA, LQKLTLGLLLAALGFFLSAGL, LPQIVVMTAAEVMFSVTGLEFSY, VLQACWLLSVAIGNMLVVVIA, and GEFTLFASLMLVDMMIFLWLA.

Belongs to the major facilitator superfamily. Proton-dependent oligopeptide transporter (POT/PTR) (TC 2.A.17) family. As to expression, expressed in thorax and abdomen of females: apical epithelial membranes of midgut, rectum, and reproductive tract. Also expressed in neuropil of the central nervous system, with elevated expression within the alpha- and beta-lobes of the mushroom bodies.

It localises to the membrane. Functionally, important role in absorption of dietary peptides. High-affinity transporter of alanylalanine. Dipeptide transport activity is proton dependent. The chain is Peptide transporter family 1 (yin) from Drosophila melanogaster (Fruit fly).